A 307-amino-acid chain; its full sequence is Plastid division protein PDV2 (307 aa).

M1 is modified (N-acetylmethionine). Topologically, residues 1–213 (MEDEEGIGLI…SGGSSHGVIR (213 aa)) are cytoplasmic. The tract at residues 28–66 (SSTTVSDNGDGNEDLSPGEGRKSEIIGNQDKDFDSISSE) is disordered. Positions 46–61 (EGRKSEIIGNQDKDFD) are enriched in basic and acidic residues. S50 bears the Phosphoserine mark. Residues 76-103 (LLRIRDALEALESQLASLQNLRQRQQYE) adopt a coiled-coil conformation. The disordered stretch occupies residues 174–206 (HLPSKKKSDANGFGSGHVRNEAEAKSPNGGSGG). A helical membrane pass occupies residues 214 to 234 (FLGSVAKIVLPIIGVISLLSA). Topologically, residues 235-307 (SGYGPEMRKR…AKRDVTYGYG (73 aa)) are chloroplast intermembrane. Residues 235-307 (SGYGPEMRKR…AKRDVTYGYG (73 aa)) form an ARC6 binding region.

As to quaternary structure, interacts (via C-terminus) with ARC6 (via C-terminus) in the chloroplast intermembrane space; this interaction induces ARC6 homodimerization and leads to the formation of a heterotetramer containing two ARC6 and two PDV2 subunits. Interacts with ARC5/DRP5B. Mostly expressed in young leaves.

It localises to the plastid. The protein localises to the chloroplast outer membrane. Component of the plastid division machinery consisting in a binary fission accomplished by the simultaneous constriction of the FtsZ ring on the stromal side of the inner envelope membrane, and the ARC5/DRP5B ring on the cytosolic side of the outer envelope membrane. Positive factor of chloroplast division required, with a dosage effect, to mediate the recruitment and dimerization of ARC5/DRP5B at the midplastid constriction site in the cytoplasm at plastid outer envelope membranes (OEMs). Prevents ARC5/DRP5B GTPase acrivity. Relays plastid division site position between stroma and outer surface via interactions with the cytoplasmic ARC5/DRP5B and the inner membrane ARC6 that recruits stromal FtsZ ring. Binding to phosphatidylinositol 4-phosphate (PI4P) modulates negatively chloroplast division. The polypeptide is Plastid division protein PDV2 (Arabidopsis thaliana (Mouse-ear cress)).